The primary structure comprises 370 residues: Pantothenate kinase 3 (370 aa).

Glu138 acts as the Proton acceptor in catalysis. Positions 192, 195, and 207 each coordinate acetyl-CoA.

This sequence belongs to the type II pantothenate kinase family. As to quaternary structure, homodimer. Highly expressed in the liver.

Its subcellular location is the cytoplasm. The enzyme catalyses (R)-pantothenate + ATP = (R)-4'-phosphopantothenate + ADP + H(+). It functions in the pathway cofactor biosynthesis; coenzyme A biosynthesis; CoA from (R)-pantothenate: step 1/5. Subject to allosteric regulation, exists in two distinct conformational states, a catalytically incompetent (or open) conformation stabilized by the binding of acetyl(acyl)-CoA, and a catalytically competent (or closed) conformation stabilized by ATP-binding. Acetyl-CoA and its thioesters act as allosteric inhibitors and compete with the ATP-binding site. Strongly inhibited by acetyl-CoA, malonyl-CoA and palmitoyl CoA and modestly inhibited by CoA. Inhibited by calcium hopantenate. Its function is as follows. Catalyzes the phosphorylation of pantothenate to generate 4'-phosphopantothenate in the first and rate-determining step of coenzyme A (CoA) synthesis. The polypeptide is Pantothenate kinase 3 (Pank3) (Mus musculus (Mouse)).